Here is a 562-residue protein sequence, read N- to C-terminus: Cytochrome c oxidase subunit 1 (562 aa).

The helical transmembrane segment at 21–41 (TLYFLVLGFLALIVGSLFGPF) threads the bilayer. Residue histidine 72 participates in Fe(II)-heme a binding. The next 8 membrane-spanning stretches (helical) occupy residues 74-94 (VLNAIVFTQLFAQAIMVYLPA), 105-125 (LMWLSWWMAFIGLVVAALPLL), 144-164 (AFYLGASVFVLSTWVSIYIVL), 187-207 (VVFWLMWFLASLGLVLEAVLF), 227-247 (LFWWTGHPIVYFWLLPAYAII), 267-287 (LAFLLFLLLSTPVGFHHQFAD), 300-320 (VLTLFVAVPSLMTAFTVAASL), and 345-365 (AFVAPVLGLLGFIPGGAGGIV). Residues histidine 233, tyrosine 237, histidine 282, and histidine 283 each coordinate Cu cation. A cross-link (1'-histidyl-3'-tyrosine (His-Tyr)) is located at residues 233 to 237 (HPIVY). Residue histidine 384 coordinates heme a3. The next 4 helical transmembrane spans lie at 385-405 (FHLQVASLVTLTAMGSLYWLL), 420-440 (LGLAVVWLWFLGMMIMAVGLH), 471-491 (VLAGIVLLVALLLFIYGLFSV), and 527-547 (IGFWFAVAAILVVLAYGPTLV). Histidine 386 lines the Fe(II)-heme a pocket.

Belongs to the heme-copper respiratory oxidase family. The cofactor is heme. Cu cation serves as cofactor.

The protein resides in the cell membrane. The enzyme catalyses 4 Fe(II)-[cytochrome c] + O2 + 8 H(+)(in) = 4 Fe(III)-[cytochrome c] + 2 H2O + 4 H(+)(out). Its pathway is energy metabolism; oxidative phosphorylation. The protein is Cytochrome c oxidase subunit 1 (cbaA) of Thermus thermophilus (strain ATCC 27634 / DSM 579 / HB8).